A 618-amino-acid polypeptide reads, in one-letter code: F-box/LRR-repeat protein At3g58940 (618 aa).

Positions 1–47 constitute an F-box domain; the sequence is MDRVSNLPEEVRCHILSFLPTKHAALTSVLSKSWLNLWKFETNLDID. LRR repeat units lie at residues 147–176, 196–223, 224–249, 282–313, 314–339, and 354–379; these read LKLR…NIDS, EVHM…SIHG, TGVE…NYSD, TLYL…GLKS, DEGR…IIEG, and CISR…GFRG. The disordered stretch occupies residues 587–618; that stretch reads ATDSERAETSSNQEMTELGQATATYFPPREGE. Polar residues predominate over residues 595 to 609; sequence TSSNQEMTELGQATA.

This Arabidopsis thaliana (Mouse-ear cress) protein is F-box/LRR-repeat protein At3g58940.